The chain runs to 583 residues: Secretogranin-2b (583 aa).

Residues Met-1–Gly-28 form the signal peptide. Disordered regions lie at residues Ala-123 to Val-159 and Val-526 to Met-583. The segment covering Ala-534–Gly-546 has biased composition (basic and acidic residues).

This sequence belongs to the chromogranin/secretogranin protein family.

The protein localises to the secreted. Neuroendocrine protein of the granin family that regulates the biogenesis of secretory granules. Required for neurovascular modeling of the hindbrain. Acts in a non-cell autonomous manner and is required for migration and proliferation of central artery endothelial cells. Required for normal courting behavior and spawning. In Danio rerio (Zebrafish), this protein is Secretogranin-2b.